The sequence spans 1116 residues: MAADLNLEWISLPRSWTYGITRGGRVFFINEEAKSTTWLHPVTGEAVVTGHRRQSTDLPTGWEEAYTFEGARYYINHNERKVTCKHPVTGQPSQDNCIFVVNEQTVATMTSEEKKERPISMINEASNYNVTSDYAVHPMSPVGRTSRASKKVHNFGKRSNSIKRNPNAPVVRRGWLYKQDSTGMKLWKKRWFVLSDLCLFYYRDEKEEGILGSILLPSFQIALLTSEDHINRKYAFKAAHPNMRTYYFCTDTGKEMELWMKAMLDAALVQTEPVKRVDKITSENAPTKETNNIPNHRVLIKPEIQNNQKNKEMSKIEEKKALEAEKYGFQKDGQDRPLTKINSVKLNSLPSEYESGSACPAQTVHYRPINLSSSENKIVNVSLADLRGGNRPNTGPLYTEADRVIQRTNSMQQLEQWIKIQKGRGHEEETRGVISYQTLPRNMPSHRAQIMARYPEGYRTLPRNSKTRPESICSVTPSTHDKTLGPGAEEKRRSMRDDTMWQLYEWQQRQFYNKQSTLPRHSTLSSPKTMVNISDQTMHSIPTSPSHGSIAAYQGYSPQRTYRSEVSSPIQRGDVTIDRRHRAHHPKHVYVPDRRSVPAGLTLQSVSPQSLQGKTLSQDEGRGTLYKYRPEEVDIDAKLSRLCEQDKVVHALEEKLQQLHKEKYTLEQALLSASQEIEMHADNPAAIQTVVLQRDDLQNGLLSTCRELSRATAELERAWREYDKLEYDVTVTRNQMQEQLDHLGEVQTESAGIQRAQIQKELWRIQDVMEGLSKHKQQRGTTEIGMIGSKPFSTVKYKNEGPDYRLYKSEPELTTVAEVDESNGEEKSEPVSEIETSVVKGSHFPVGVVPPRAKSPTPESSTIASYVTLRKTKKMMDLRTERPRSAVEQLCLAESTRPRMTVEEQMERIRRHQQACLREKKKGLNVIGASDQSPLQSPSNLRDNPFRTTQTRRRDDKELDTAIRENDVKPDHETPATEIVQLKETEPQNVDFSKELKKTENISYEMLFEPEPNGVNSVEMMDKERNKDKMPEDVTFSPQDETQTANHKPEEHPEENTKNSVDEQEETVISYESTPEVSRGNQTMAVKSLSPSPESSASPVPSTQPQLTEGSHFMCV.

Alanine 2 carries the post-translational modification N-acetylalanine. Residues 10–43 (ISLPRSWTYGITRGGRVFFINEEAKSTTWLHPVT) enclose the WW 1 domain. A Phosphoserine modification is found at serine 55. In terms of domain architecture, WW 2 spans 56–89 (TDLPTGWEEAYTFEGARYYINHNERKVTCKHPVT). The tract at residues 140–163 (SPVGRTSRASKKVHNFGKRSNSIK) is disordered. Residues 147-156 (RASKKVHNFG) show a composition bias toward basic residues. Residues 169-268 (PVVRRGWLYK…WMKAMLDAAL (100 aa)) enclose the PH domain. Lysine 301 is covalently cross-linked (Glycyl lysine isopeptide (Lys-Gly) (interchain with G-Cter in SUMO2)). Serine 382 and serine 410 each carry phosphoserine. Threonine 438 and threonine 460 each carry phosphothreonine. The segment at 459-495 (RTLPRNSKTRPESICSVTPSTHDKTLGPGAEEKRRSM) is disordered. Over residues 479–495 (THDKTLGPGAEEKRRSM) the composition is skewed to basic and acidic residues. Phosphoserine is present on residues serine 568, serine 607, serine 809, serine 855, serine 933, and serine 937. Disordered regions lie at residues 928–978 (GASD…PATE) and 1025–1116 (RNKD…FMCV). The span at 930–949 (SDQSPLQSPSNLRDNPFRTT) shows a compositional bias: polar residues. Positions 952-978 (RRRDDKELDTAIRENDVKPDHETPATE) are enriched in basic and acidic residues. Positions 1036–1046 (FSPQDETQTAN) are enriched in polar residues. The segment covering 1047–1061 (HKPEEHPEENTKNSV) has biased composition (basic and acidic residues). Positions 1070 to 1085 (SYESTPEVSRGNQTMA) are enriched in polar residues. The span at 1088–1101 (SLSPSPESSASPVP) shows a compositional bias: low complexity.

In terms of tissue distribution, highly expressed in heart and kidney.

Its subcellular location is the cytoplasm. The sequence is that of Pleckstrin homology domain-containing family A member 5 (PLEKHA5) from Homo sapiens (Human).